The chain runs to 115 residues: UPF0122 protein lp_1634 (115 aa).

The protein belongs to the UPF0122 family.

In terms of biological role, might take part in the signal recognition particle (SRP) pathway. This is inferred from the conservation of its genetic proximity to ftsY/ffh. May be a regulatory protein. The sequence is that of UPF0122 protein lp_1634 from Lactiplantibacillus plantarum (strain ATCC BAA-793 / NCIMB 8826 / WCFS1) (Lactobacillus plantarum).